The chain runs to 422 residues: Large ribosomal subunit protein uL4 (422 aa).

The residue at position 2 (A2) is an N-acetylalanine. K14 bears the N6-acetyllysine mark. R97 carries the omega-N-methylarginine modification. The residue at position 106 (K106) is an N6-acetyllysine. A Glycyl lysine isopeptide (Lys-Gly) (interchain with G-Cter in SUMO2) cross-link involves residue K239. The residue at position 259 (K259) is an N6-acetyllysine. T266 carries the phosphothreonine modification. S290 and S295 each carry phosphoserine. Position 300 is a citrulline (R300). Residue K327 forms a Glycyl lysine isopeptide (Lys-Gly) (interchain with G-Cter in SUMO2) linkage. N6-acetyllysine is present on residues K333 and K353. Residues 359–422 are disordered; that stretch reads EAKSDQKGVQ…PTSEEKKAAA (64 aa). K361 bears the N6-acetyllysine; alternate mark. Residue K361 forms a Glycyl lysine isopeptide (Lys-Gly) (interchain with G-Cter in SUMO1); alternate linkage. Phosphoserine is present on S362. Composition is skewed to basic and acidic residues over residues 376-385 and 402-422; these read NKEKKAVGDK and PAAEKKPTEKKPTSEEKKAAA.

This sequence belongs to the universal ribosomal protein uL4 family. In terms of assembly, component of the large ribosomal subunit. May bind IPO9 with low affinity. Interacts with RBM3. In terms of processing, citrullinated by PADI4.

The protein resides in the cytoplasm. Its function is as follows. Component of the large ribosomal subunit. The ribosome is a large ribonucleoprotein complex responsible for the synthesis of proteins in the cell. The chain is Large ribosomal subunit protein uL4 (RPL4) from Bos taurus (Bovine).